A 568-amino-acid chain; its full sequence is Oxygen-dependent choline dehydrogenase (568 aa).

FAD is bound at residue 6-35; that stretch reads DYIIVGAGSAGCVLADRLSASGEHYILLLE. His-470 functions as the Proton acceptor in the catalytic mechanism.

This sequence belongs to the GMC oxidoreductase family. The cofactor is FAD.

The enzyme catalyses choline + A = betaine aldehyde + AH2. It catalyses the reaction betaine aldehyde + NAD(+) + H2O = glycine betaine + NADH + 2 H(+). It participates in amine and polyamine biosynthesis; betaine biosynthesis via choline pathway; betaine aldehyde from choline (cytochrome c reductase route): step 1/1. Its function is as follows. Involved in the biosynthesis of the osmoprotectant glycine betaine. Catalyzes the oxidation of choline to betaine aldehyde and betaine aldehyde to glycine betaine at the same rate. The protein is Oxygen-dependent choline dehydrogenase of Photobacterium profundum (strain SS9).